The primary structure comprises 331 residues: Threonine-phosphate decarboxylase (331 aa).

K192 carries the N6-(pyridoxal phosphate)lysine modification.

The protein belongs to the class-I pyridoxal-phosphate-dependent aminotransferase family. As to quaternary structure, homodimer. Pyridoxal 5'-phosphate is required as a cofactor.

Its subcellular location is the cytoplasm. It catalyses the reaction O-phospho-L-threonine + H(+) = (R)-1-aminopropan-2-yl phosphate + CO2. It participates in cofactor biosynthesis; adenosylcobalamin biosynthesis. Its function is as follows. Decarboxylates L-threonine-O-3-phosphate to yield (R)-1-amino-2-propanol O-2-phosphate, the precursor for the linkage between the nucleotide loop and the corrin ring in cobalamin. This chain is Threonine-phosphate decarboxylase (cobC), found in Pseudomonas aeruginosa (strain ATCC 15692 / DSM 22644 / CIP 104116 / JCM 14847 / LMG 12228 / 1C / PRS 101 / PAO1).